The primary structure comprises 314 residues: Serine/threonine-protein phosphatase SIT4 (314 aa).

Positions 53, 55, 85, and 117 each coordinate Mn(2+). His118 serves as the catalytic Proton donor. Mn(2+) is bound by residues His167 and His241.

This sequence belongs to the PPP phosphatase family. PP-6 (PP-V) subfamily. As to quaternary structure, interacts with MDS3. Mn(2+) is required as a cofactor.

Its subcellular location is the cytoplasm. The enzyme catalyses O-phospho-L-seryl-[protein] + H2O = L-seryl-[protein] + phosphate. It catalyses the reaction O-phospho-L-threonyl-[protein] + H2O = L-threonyl-[protein] + phosphate. Functionally, serine/threonine protein phosphatase which is involved in the dephosphorylation of the large subunit of RNA polymerase II. Is required in late G1 for normal G1 cyclin expression, bud initiation and expression of certain genes that are periodically expressed during late G1. Plays a role during hyphal growth through the regulation of cell wall biogenesis, osmosensing and protein translation. Involved in virulence in a mouse systemic infection model. The chain is Serine/threonine-protein phosphatase SIT4 (SIT4) from Candida albicans (strain SC5314 / ATCC MYA-2876) (Yeast).